The following is a 1563-amino-acid chain: Ribulose bisphosphate carboxylase (1563 aa).

Positions 32 and 79 each coordinate substrate. Positions 197–217 (LAAAFVGASTTRKASSVARRA) are cleaved as a propeptide — linker. Position 328 (N328) interacts with substrate. Residue K383 is the Proton acceptor of the active site. K385 contributes to the substrate binding site. The Mg(2+) site is built by K408, D410, and E411. Position 408 is an N6-carboxylysine (K408). H504 serves as the catalytic Proton acceptor. The substrate site is built by R505, H538, and S585. Positions 703–723 (LAAAFVGASTTRKASSVARRA) are cleaved as a propeptide — linker. N834 provides a ligand contact to substrate. The Proton acceptor role is filled by K889. K891 contributes to the substrate binding site. The Mg(2+) site is built by K914, D916, and E917. K914 bears the N6-carboxylysine mark. The Proton acceptor role is filled by H1010. Substrate contacts are provided by R1011, H1044, and S1091. Positions 1209–1229 (LAAAFVGASTTRKASSVARRA) are cleaved as a propeptide — linker. N1340 is a binding site for substrate. The active-site Proton acceptor is the K1395. K1397 provides a ligand contact to substrate. Residues K1420, D1422, and E1423 each coordinate Mg(2+). K1420 is subject to N6-carboxylysine. The active-site Proton acceptor is H1516. Positions 1517 and 1550 each coordinate substrate.

The protein belongs to the RuBisCO large chain family. Type II subfamily. In terms of assembly, homodimer. Mg(2+) serves as cofactor. In terms of processing, in Western blots an approximately 220 kDa polyprotein and 2 smaller proteins of about 55 and 52 kDa are detected, suggesting the polyprotein may be cleaved at one end of the linker and then at the other end to give mature RuBisCO.

The protein localises to the plastid. Its subcellular location is the chloroplast. The catalysed reaction is 2 (2R)-3-phosphoglycerate + 2 H(+) = D-ribulose 1,5-bisphosphate + CO2 + H2O. It catalyses the reaction D-ribulose 1,5-bisphosphate + O2 = 2-phosphoglycolate + (2R)-3-phosphoglycerate + 2 H(+). Its function is as follows. RuBisCO catalyzes two reactions: the carboxylation of D-ribulose 1,5-bisphosphate, the primary event in carbon dioxide fixation, as well as the oxidative fragmentation of the pentose substrate. Both reactions occur simultaneously and in competition at the same active site. This chain is Ribulose bisphosphate carboxylase (rbcL), found in Prorocentrum minimum (Dinoflagellate).